A 212-amino-acid chain; its full sequence is Uridine kinase (212 aa).

13–20 (GASASGKS) is a binding site for ATP.

This sequence belongs to the uridine kinase family.

Its subcellular location is the cytoplasm. The catalysed reaction is uridine + ATP = UMP + ADP + H(+). It carries out the reaction cytidine + ATP = CMP + ADP + H(+). It participates in pyrimidine metabolism; CTP biosynthesis via salvage pathway; CTP from cytidine: step 1/3. Its pathway is pyrimidine metabolism; UMP biosynthesis via salvage pathway; UMP from uridine: step 1/1. The sequence is that of Uridine kinase from Shewanella denitrificans (strain OS217 / ATCC BAA-1090 / DSM 15013).